A 193-amino-acid chain; its full sequence is Protein PrsJ (193 aa).

An N-terminal signal peptide occupies residues 1–27 (MVVNKTTAVLYLIALSLSGFIHTFLRA).

It is found in the periplasm. In terms of biological role, this protein maintains pilus integrity and thus is an important participant in pilus assembly. It may function as molecular chaperone directly or indirectly in the correct assembly of PapA subunits. The protein is Protein PrsJ (prsJ) of Escherichia coli.